The following is a 1430-amino-acid chain: ABC transporter eupT (1430 aa).

The interval 1–26 (MAPAIDSTVNDLQPNTPNPEKALSSQ) is disordered. The 257-residue stretch at 112-368 (LALPAMIRQL…FVNLGFECPA (257 aa)) folds into the ABC transporter 1 domain. N292 carries an N-linked (GlcNAc...) asparagine glycan. The next 5 helical transmembrane spans lie at 476-496 (WPAVWVMVGNTIMALIMSSLF), 511-531 (VVLFMAILFNAFSSILEVMTL), 557-577 (VLVDMPMKITSTISFNLVFYF), 586-606 (GNFFFYLLVVFLIVLAMSGVF), and 620-640 (MVPASVLMLALLIFTGFVVPV). An N-linked (GlcNAc...) asparagine glycan is attached at N684. Residues 707-727 (VGIIIAMVIFNYLMYFIASEY) form a helical membrane-spanning segment. One can recognise an ABC transporter 2 domain in the interval 789–1032 (FHWNNVCYDL…TLIDYFERNG (244 aa)). ATP is bound at residue 825–832 (GVSGAGKT). The N-linked (GlcNAc...) asparagine glycan is linked to N1019. The next 6 helical transmembrane spans lie at 1133–1153 (ITLCIATSLFIGLVFFNAPLS), 1213–1233 (LPWSTLASVFMWALFYYPIGF), 1249–1269 (LMWLLFWQFLVWVSTFTHMCI), 1278–1298 (GGNIANFLFVLAFFFCGVLAS), 1305–1325 (FWIFLYRASPLSYWVSAVLST), and 1400–1420 (FGILWVYIGFNIAAALALYWI).

It belongs to the ABC transporter superfamily. ABCG family. PDR (TC 3.A.1.205) subfamily.

It is found in the cell membrane. ABC transporter; part of the gene cluster that mediates the biosynthesis of eupenifeldin, a bistropolone meroterpenoid that acts as an antitumor agent. This is ABC transporter eupT from Phoma sp.